A 95-amino-acid chain; its full sequence is Aspartyl/glutamyl-tRNA(Asn/Gln) amidotransferase subunit C (95 aa).

Belongs to the GatC family. In terms of assembly, heterotrimer of A, B and C subunits.

It catalyses the reaction L-glutamyl-tRNA(Gln) + L-glutamine + ATP + H2O = L-glutaminyl-tRNA(Gln) + L-glutamate + ADP + phosphate + H(+). The catalysed reaction is L-aspartyl-tRNA(Asn) + L-glutamine + ATP + H2O = L-asparaginyl-tRNA(Asn) + L-glutamate + ADP + phosphate + 2 H(+). Its function is as follows. Allows the formation of correctly charged Asn-tRNA(Asn) or Gln-tRNA(Gln) through the transamidation of misacylated Asp-tRNA(Asn) or Glu-tRNA(Gln) in organisms which lack either or both of asparaginyl-tRNA or glutaminyl-tRNA synthetases. The reaction takes place in the presence of glutamine and ATP through an activated phospho-Asp-tRNA(Asn) or phospho-Glu-tRNA(Gln). The protein is Aspartyl/glutamyl-tRNA(Asn/Gln) amidotransferase subunit C of Caulobacter sp. (strain K31).